Here is a 94-residue protein sequence, read N- to C-terminus: Cell division protein FtsB (94 aa).

Residues 1–3 (MRA) lie on the Cytoplasmic side of the membrane. A helical membrane pass occupies residues 4 to 21 (FAVLLIIALGWLQYTLWF). At 22 to 94 (GKNGMEDYAQ…YRIIDENSEE (73 aa)) the chain is on the periplasmic side. Residues 40-60 (EEVNQGLRNRNGQMFAEIDDL) are a coiled coil.

This sequence belongs to the FtsB family. Part of a complex composed of FtsB, FtsL and FtsQ.

It is found in the cell inner membrane. In terms of biological role, essential cell division protein. May link together the upstream cell division proteins, which are predominantly cytoplasmic, with the downstream cell division proteins, which are predominantly periplasmic. The polypeptide is Cell division protein FtsB (Aliivibrio salmonicida (strain LFI1238) (Vibrio salmonicida (strain LFI1238))).